The following is a 347-amino-acid chain: Phenylalanine--tRNA ligase alpha subunit (347 aa).

Glutamate 265 provides a ligand contact to Mg(2+).

The protein belongs to the class-II aminoacyl-tRNA synthetase family. Phe-tRNA synthetase alpha subunit type 1 subfamily. As to quaternary structure, tetramer of two alpha and two beta subunits. It depends on Mg(2+) as a cofactor.

The protein resides in the cytoplasm. It carries out the reaction tRNA(Phe) + L-phenylalanine + ATP = L-phenylalanyl-tRNA(Phe) + AMP + diphosphate + H(+). This Mycolicibacterium paratuberculosis (strain ATCC BAA-968 / K-10) (Mycobacterium paratuberculosis) protein is Phenylalanine--tRNA ligase alpha subunit.